We begin with the raw amino-acid sequence, 189 residues long: S-protein homolog 26 (189 aa).

An N-terminal signal peptide occupies residues 1 to 25 (MISMNRLSILLFVFAFGLTMMSNTA).

This sequence belongs to the plant self-incompatibility (S1) protein family.

The protein localises to the secreted. The protein is S-protein homolog 26 of Arabidopsis thaliana (Mouse-ear cress).